The primary structure comprises 204 residues: Urease accessory protein UreG (204 aa).

GTP is bound at residue 11–18 (GPVGAGKT).

This sequence belongs to the SIMIBI class G3E GTPase family. UreG subfamily. As to quaternary structure, homodimer. UreD, UreF and UreG form a complex that acts as a GTP-hydrolysis-dependent molecular chaperone, activating the urease apoprotein by helping to assemble the nickel containing metallocenter of UreC. The UreE protein probably delivers the nickel.

It is found in the cytoplasm. Functionally, facilitates the functional incorporation of the urease nickel metallocenter. This process requires GTP hydrolysis, probably effectuated by UreG. The chain is Urease accessory protein UreG from Staphylococcus aureus (strain Mu3 / ATCC 700698).